Reading from the N-terminus, the 197-residue chain is UPF0251 protein CT1277 (197 aa).

The tract at residues 138–197 (GGGFGGGRRGGGKCRGFRSGLDRGPGHGEGRCQGEGHGNGNGNGNGQGRMRRNQQEGGEV) is disordered. Over residues 157–171 (GLDRGPGHGEGRCQG) the composition is skewed to basic and acidic residues. The segment covering 172 to 184 (EGHGNGNGNGNGQ) has biased composition (gly residues).

This sequence belongs to the UPF0251 family.

This chain is UPF0251 protein CT1277, found in Chlorobaculum tepidum (strain ATCC 49652 / DSM 12025 / NBRC 103806 / TLS) (Chlorobium tepidum).